Reading from the N-terminus, the 303-residue chain is MCTLMHKHDDSLFSNSFGFLRLPLEFYPYTRHNDWVITGVPFDIATSGRSGSRFGPASIRKASINLAWENCRWPWNFDIRQKLKIIDCGDLIYKSGNVQDFTNILQKHIENLLRFRKKILLLGGDHYITLPVLRAYSKFFGTISIIHFDAHADYYDNNNQYDHGAVILYALHEKLINPNRSVQIGIRTEYDKNFGFTVLDAEYVNTTAVHVLINQIVSVIQNRPVYLTFDIDCLDPSVAPGTGTPVIGGLTTSCALQIIRGFQKLNIIGIDIVEVAPVYDCAQITALAAATLGLEMLYTQVKF.

Residues H126, D149, H151, D153, D230, and D232 each coordinate Mn(2+).

This sequence belongs to the arginase family. Agmatinase subfamily. Mn(2+) serves as cofactor.

The enzyme catalyses agmatine + H2O = urea + putrescine. Functionally, catalyzes the formation of putrescine from agmatine. This is Agmatinase (speB) from Blochmanniella floridana.